The following is a 421-amino-acid chain: Trimethyllysine dioxygenase, mitochondrial (421 aa).

Residues 1-15 constitute a mitochondrion transit peptide; it reads MWYHKLLHQQSRLQN. Residues lysine 179 and lysine 236 each carry the N6-acetyllysine modification. Residues histidine 242, aspartate 244, and histidine 389 each coordinate Fe cation.

Belongs to the gamma-BBH/TMLD family. Homodimer. Fe(2+) is required as a cofactor. The cofactor is L-ascorbate.

It localises to the mitochondrion matrix. It catalyses the reaction N(6),N(6),N(6)-trimethyl-L-lysine + 2-oxoglutarate + O2 = (3S)-3-hydroxy-N(6),N(6),N(6)-trimethyl-L-lysine + succinate + CO2. Its pathway is amine and polyamine biosynthesis; carnitine biosynthesis. Functionally, converts trimethyllysine (TML) into hydroxytrimethyllysine (HTML). The sequence is that of Trimethyllysine dioxygenase, mitochondrial (Tmlhe) from Rattus norvegicus (Rat).